Consider the following 266-residue polypeptide: UPF0294 protein Ent638_0743 (266 aa).

It belongs to the UPF0294 family.

It localises to the cytoplasm. The polypeptide is UPF0294 protein Ent638_0743 (Enterobacter sp. (strain 638)).